Here is an 820-residue protein sequence, read N- to C-terminus: Probable ATP-dependent RNA helicase DDX23 (820 aa).

A compositionally biased stretch (basic and acidic residues) spans 1–42 (MAGELADKKDRDASPSKEERKRSRTPDRERDRDRDRKSSPSK). Positions 1 to 244 (MAGELADKKD…QKIREEKDKS (244 aa)) are disordered. Phosphoserine occurs at positions 14 and 16. Over residues 43 to 65 (DRKRHRSRDRRRGGSRSRSRSRS) the composition is skewed to basic residues. A compositionally biased stretch (basic and acidic residues) spans 66-105 (KSAERERRHKERERDKERDRNKKDRDRDKDGHRRDKDRKR). Phosphoserine is present on residues Ser107 and Ser109. Composition is skewed to basic and acidic residues over residues 112–137 (RGKD…DKKP), 147–226 (LLAK…RETN), and 233–244 (GRQKIREEKDKS). Positions 391 to 419 (RSWKDSSLPPHILEVIDKCGYKEPTPIQR) match the Q motif motif. Positions 422–627 (IPIGLQNRDI…RSYLRRPAVV (206 aa)) constitute a Helicase ATP-binding domain. Position 435–442 (435–442 (AETGSGKT)) interacts with ATP. A DEAD box motif is present at residues 549–552 (DEAD). In terms of domain architecture, Helicase C-terminal spans 651 to 799 (KRKKLLAILE…SCPPELANHP (149 aa)). Glycyl lysine isopeptide (Lys-Gly) (interchain with G-Cter in SUMO2) cross-links involve residues Lys686 and Lys811.

It belongs to the DEAD box helicase family. DDX23/PRP28 subfamily. As to quaternary structure, the phosphorylated form (by SRPK2) is a component of the U4/U6-U5 tri-snRNP complex composed of the U4, U6 and U5 snRNAs and at least PRPF3, PRPF4, PRPF6, PRPF8, PRPF31, SNRNP200, TXNL4A, WDR57, SNRNP40, DDX23, CD2BP2, PPIH, SNU13, EFTUD2, SART1 and USP39. Identified in the spliceosome C complex. Interacts with ERBB4. Interacts with ERCC6. In terms of processing, in vitro phosphorylated by CLK1 and U1 snRNP-associated protein kinase. Phosphorylated by SRPK2 and this phosphorylation is required for its association with the tri-snRNP (U4/U6-U5 tri-small nuclear ribonucleoproteins) and subsequent spliceosomal B complex formation. May be phosphorylated by SRPK2 on Ser residues in the SR domain; the phosphorylation is required for the removal of inappropriate R-loops during transcription.

Its subcellular location is the nucleus. It localises to the chromosome. It carries out the reaction ATP + H2O = ADP + phosphate + H(+). Involved in pre-mRNA splicing and its phosphorylated form (by SRPK2) is required for spliceosomal B complex formation. Independently of its spliceosome formation function, required for the suppression of incorrect R-loops formed during transcription; R-loops are composed of a DNA:RNA hybrid and the associated non-template single-stranded DNA. This chain is Probable ATP-dependent RNA helicase DDX23, found in Homo sapiens (Human).